The chain runs to 208 residues: ATP-dependent Clp protease proteolytic subunit (208 aa).

Ser105 functions as the Nucleophile in the catalytic mechanism. His130 is an active-site residue.

It belongs to the peptidase S14 family. Fourteen ClpP subunits assemble into 2 heptameric rings which stack back to back to give a disk-like structure with a central cavity, resembling the structure of eukaryotic proteasomes.

It is found in the cytoplasm. The enzyme catalyses Hydrolysis of proteins to small peptides in the presence of ATP and magnesium. alpha-casein is the usual test substrate. In the absence of ATP, only oligopeptides shorter than five residues are hydrolyzed (such as succinyl-Leu-Tyr-|-NHMec, and Leu-Tyr-Leu-|-Tyr-Trp, in which cleavage of the -Tyr-|-Leu- and -Tyr-|-Trp bonds also occurs).. Cleaves peptides in various proteins in a process that requires ATP hydrolysis. Has a chymotrypsin-like activity. Plays a major role in the degradation of misfolded proteins. This is ATP-dependent Clp protease proteolytic subunit from Xylella fastidiosa (strain 9a5c).